The following is a 420-amino-acid chain: Glutamate-1-semialdehyde 2,1-aminomutase (420 aa).

Lys259 is modified (N6-(pyridoxal phosphate)lysine).

The protein belongs to the class-III pyridoxal-phosphate-dependent aminotransferase family. HemL subfamily. Pyridoxal 5'-phosphate is required as a cofactor.

The protein localises to the cytoplasm. The catalysed reaction is (S)-4-amino-5-oxopentanoate = 5-aminolevulinate. Its pathway is porphyrin-containing compound metabolism; protoporphyrin-IX biosynthesis; 5-aminolevulinate from L-glutamyl-tRNA(Glu): step 2/2. In Methanothermobacter thermautotrophicus (strain ATCC 29096 / DSM 1053 / JCM 10044 / NBRC 100330 / Delta H) (Methanobacterium thermoautotrophicum), this protein is Glutamate-1-semialdehyde 2,1-aminomutase (hemL).